A 414-amino-acid chain; its full sequence is Tryptophan synthase beta chain (414 aa).

A disordered region spans residues 1 to 26; sequence MVSTFSRQDQNYKNDDLNQPSKEGRF. The segment covering 10–26 has biased composition (basic and acidic residues); the sequence is QNYKNDDLNQPSKEGRF. Lys-109 is subject to N6-(pyridoxal phosphate)lysine.

It belongs to the TrpB family. Tetramer of two alpha and two beta chains. Pyridoxal 5'-phosphate is required as a cofactor.

The catalysed reaction is (1S,2R)-1-C-(indol-3-yl)glycerol 3-phosphate + L-serine = D-glyceraldehyde 3-phosphate + L-tryptophan + H2O. It functions in the pathway amino-acid biosynthesis; L-tryptophan biosynthesis; L-tryptophan from chorismate: step 5/5. In terms of biological role, the beta subunit is responsible for the synthesis of L-tryptophan from indole and L-serine. This chain is Tryptophan synthase beta chain, found in Prochlorococcus marinus (strain MIT 9312).